Reading from the N-terminus, the 1048-residue chain is FERM, ARHGEF and pleckstrin domain-containing protein 1 (1048 aa).

The interval 1–37 (MGEIEQKPTPASRLGAPENSGISTLERGQKPPPTPSG) is disordered. 2 positions are modified to phosphoserine: Ser20 and Ser23. Thr24 carries the post-translational modification Phosphothreonine. Residues 40–320 (MTVKIQMLDD…EHHAFFRLFE (281 aa)) form the FERM domain. Phosphoserine occurs at positions 340, 373, 389, 403, 427, 433, and 437. Residues 361-536 (FERKHSKIHS…TDDEEEGRRK (176 aa)) form a disordered region. Residues 371-395 (TRSLVSQPTAPNSEVPKQSPQSASL) show a composition bias toward polar residues. 2 stretches are compositionally biased toward polar residues: residues 472–491 (STGS…NSQG) and 498–513 (VTLS…QASP). Ser512 and Ser516 each carry phosphoserine. The DH domain occupies 542–733 (KAYYIAKEVS…TEMVAQLHGT (192 aa)). The PH 1 domain maps to 762–859 (EFIRLGSLSK…WMEDIQMAID (98 aa)). A phosphoserine mark is found at Ser836, Ser875, and Ser881. The segment at 865–907 (NGPTPELLASSPPDNKSPDEATAADQESEDDLSASRTSLERQA) is disordered. Thr886 is modified (phosphothreonine). Ser892, Ser899, and Ser902 each carry phosphoserine. The PH 2 domain occupies 935 to 1032 (ENQLSGNLLR…WMEVIRSATS (98 aa)).

Interacts with CADM1. Interacts with RAC1. As to expression, detected in brain cortex, hippocampus, striatum, olfactory bulb, cerebellum and hindbrain (at protein level).

Its subcellular location is the cell membrane. It is found in the synapse. The protein resides in the synaptosome. It localises to the cytoplasm. The protein localises to the cytosol. Its subcellular location is the cell projection. It is found in the filopodium. The protein resides in the dendrite. It localises to the dendritic spine. Functionally, functions as a guanine nucleotide exchange factor for RAC1. May play a role in semaphorin signaling. Plays a role in the assembly and disassembly of dendritic filopodia, the formation of dendritic spines, regulation of dendrite length and ultimately the formation of synapses. The protein is FERM, ARHGEF and pleckstrin domain-containing protein 1 (Farp1) of Mus musculus (Mouse).